A 462-amino-acid polypeptide reads, in one-letter code: MGSTEQATSRVRGAARTSAQLFEAACSVIPGGVNSPVRAFTAVGGTPRFITEAHGCWLIDADGNRYVDLVCSWGPMILGHAHPAVVEAVAKAAARGLSFGAPTPAETQLAGEIIGRVAPVERIRLVNSGTEATMSAVRLARGFTGRAKIVKFSGCYHGHVDALLADAGSGVATLGLCDDPQRPASPRSQSSRGLPSSPGVTGAAAADTIVLPYNDIDAVQQTFARFGEQIAAVITEASPGNMGVVPPGPGFNAALRAITAEHGALLILDEVMTGFRVSRSGWYGIDPVPADLFAFGKVMSGGMPAAAFGGRAEVMQRLAPLGPVYQAGTLSGNPVAVAAGLATLRAADDAVYTALDANADRLAGLLSEALTDAVVPHQISRAGNMLSVFFGETPVTDFASARASQTWRYPAFFHAMLDAGVYPPCSAFEAWFVSAALDDAAFGRIANALPAAARAAAQERPA.

The interval 178-200 (DDPQRPASPRSQSSRGLPSSPGV) is disordered. Residues 182–192 (RPASPRSQSSR) show a composition bias toward low complexity. Position 297 is an N6-(pyridoxal phosphate)lysine (Lys-297).

Belongs to the class-III pyridoxal-phosphate-dependent aminotransferase family. HemL subfamily. In terms of assembly, homodimer. It depends on pyridoxal 5'-phosphate as a cofactor.

Its subcellular location is the cytoplasm. It carries out the reaction (S)-4-amino-5-oxopentanoate = 5-aminolevulinate. The protein operates within porphyrin-containing compound metabolism; protoporphyrin-IX biosynthesis; 5-aminolevulinate from L-glutamyl-tRNA(Glu): step 2/2. This is Glutamate-1-semialdehyde 2,1-aminomutase (hemL) from Mycobacterium bovis (strain ATCC BAA-935 / AF2122/97).